A 480-amino-acid polypeptide reads, in one-letter code: Putative auxin transporter-like protein 4 (480 aa).

At 1 to 66 (MASEKVETIV…DAWFSCASNQ (66 aa)) the chain is on the cytoplasmic side. Residues 67–84 (VAQVLLTLPYSFSQLGMA) traverse the membrane as a helical segment. The Extracellular segment spans residues 85 to 86 (SG). A helical membrane pass occupies residues 87–107 (VAFQVFYGLMGSWTAYLISVL). Topologically, residues 108–143 (YVEYRTRRERDKVDFRNHVIQWFEVLDGLLGRHWRN) are cytoplasmic. The helical transmembrane segment at 144–164 (AGLLFNCTFLLFGSVIQLIAC) threads the bilayer. Topologically, residues 165 to 179 (ASNIYYINDRLDKRT) are extracellular. Residues 180–200 (WTYIFGACCATTVFVPSFHNY) form a helical membrane-spanning segment. Residues 201–203 (RVW) are Cytoplasmic-facing. The helical transmembrane segment at 204 to 224 (SFLGLLMTSYTAWYLTVAAVV) threads the bilayer. The Extracellular segment spans residues 225 to 241 (HGKVDGAAPRAGPSKTM). The helical transmembrane segment at 242 to 262 (VLYFTGATNILYTFGGHAVTV) threads the bilayer. Residues 263–275 (EIMHAMWRPRRFK) lie on the Cytoplasmic side of the membrane. A helical membrane pass occupies residues 276 to 296 (MIYLAATAYVLTLTLPSAAAM). At 297–323 (YWAFGDALLDHSNAFALLPRTPWRDAA) the chain is on the extracellular side. A helical transmembrane segment spans residues 324 to 344 (VVLMLIHQFITFGFACTPLYF). Topologically, residues 345–365 (VWEKAIGVHGGAGVLRRAAAR) are cytoplasmic. A helical transmembrane segment spans residues 366-386 (LPVVLPIWFLAVIFPFFGPIN). Position 387 (S387) is a topological domain, extracellular. Residues 388–408 (TVGSFLVSFTVYIIPAMAHMA) traverse the membrane as a helical segment. The Cytoplasmic portion of the chain corresponds to 409–433 (TFAPAAARENAVEPPPRALGGWPGT). Residues 434–454 (FAANCFVVAWVLVVGFGFGGW) form a helical membrane-spanning segment. The Extracellular segment spans residues 455-480 (ASTVNFVRQVDTFGLFTKCYQCPPRH).

Belongs to the amino acid/polyamine transporter 2 family. Amino acid/auxin permease (AAAP) (TC 2.A.18.1) subfamily.

Its subcellular location is the cell membrane. In terms of biological role, carrier protein involved in proton-driven auxin influx. May mediate the formation of auxin gradient from developing leaves (site of auxin biosynthesis) to tips. This chain is Putative auxin transporter-like protein 4, found in Oryza sativa subsp. japonica (Rice).